The sequence spans 1024 residues: Translation initiation factor IF-2 (1024 aa).

The disordered stretch occupies residues 33–425 (SHMSSLEDDT…GRVKKTKTMK (393 aa)). 4 stretches are compositionally biased toward basic and acidic residues: residues 43 to 62 (EARV…DTRV), 135 to 148 (TPED…ELKP), 167 to 198 (TPAK…KETS), and 223 to 263 (SKPD…KEVR). The span at 316–325 (EATQAPTSPQ) shows a compositional bias: polar residues. The segment covering 332 to 350 (KPADKGPARAQAHRPDTGR) has biased composition (basic and acidic residues). Residues 365-375 (RSKKKEWKKKG) show a composition bias toward basic residues. Basic and acidic residues predominate over residues 394-406 (SVVEGKDLYEKGR). Over residues 407–423 (SGKKGRRKDGRVKKTKT) the composition is skewed to basic residues. The tr-type G domain maps to 518 to 687 (SRPPVVTIMG…LLQSEVLELK (170 aa)). The tract at residues 527–534 (GHVDHGKT) is G1. 527-534 (GHVDHGKT) contributes to the GTP binding site. A G2 region spans residues 552-556 (GITQH). The segment at 573-576 (DTPG) is G3. Residues 573 to 577 (DTPGH) and 627 to 630 (NKMD) each bind GTP. Residues 627-630 (NKMD) are G4. Positions 663-665 (SAK) are G5.

This sequence belongs to the TRAFAC class translation factor GTPase superfamily. Classic translation factor GTPase family. IF-2 subfamily.

The protein resides in the cytoplasm. In terms of biological role, one of the essential components for the initiation of protein synthesis. Protects formylmethionyl-tRNA from spontaneous hydrolysis and promotes its binding to the 30S ribosomal subunits. Also involved in the hydrolysis of GTP during the formation of the 70S ribosomal complex. The chain is Translation initiation factor IF-2 from Desulforapulum autotrophicum (strain ATCC 43914 / DSM 3382 / VKM B-1955 / HRM2) (Desulfobacterium autotrophicum).